We begin with the raw amino-acid sequence, 171 residues long: Adenine phosphoribosyltransferase (171 aa).

It belongs to the purine/pyrimidine phosphoribosyltransferase family. Homodimer.

It localises to the cytoplasm. It carries out the reaction AMP + diphosphate = 5-phospho-alpha-D-ribose 1-diphosphate + adenine. It functions in the pathway purine metabolism; AMP biosynthesis via salvage pathway; AMP from adenine: step 1/1. Functionally, catalyzes a salvage reaction resulting in the formation of AMP, that is energically less costly than de novo synthesis. This Acidiphilium cryptum (strain JF-5) protein is Adenine phosphoribosyltransferase.